The primary structure comprises 123 residues: NHL-repeat-containing protein 4 (123 aa).

NHL repeat units follow at residues 35-78 (QPLG…FPRA) and 79-119 (GPPI…YQGL).

The sequence is that of NHL-repeat-containing protein 4 (NHLRC4) from Homo sapiens (Human).